The following is a 131-amino-acid chain: Protein FAM107B (131 aa).

A2 is subject to N-acetylalanine. Positions 39-79 (MNQKRGLAPQNKPELQKVMEKRRRDQVIKQKEEEAQKKKSD) are disordered. Position 50 is an N6-acetyllysine (K50). Basic and acidic residues predominate over residues 52 to 79 (ELQKVMEKRRRDQVIKQKEEEAQKKKSD). Residues 61 to 112 (RRDQVIKQKEEEAQKKKSDLEIELLKRQQKLEQLELEKQKLQEEQENAPEFV) adopt a coiled-coil conformation.

The protein belongs to the FAM107 family. Expressed in the hippocampus and hypothalamus. Expressed in the pontine nuclei and reticulotegmental nucleus. Expressed in Purkinje cell and nuclear layers of the cerebelum. Expressed in the choroid plexus. Expressed in hippocampal granule neurons of the dente gyrus.

The sequence is that of Protein FAM107B from Mus musculus (Mouse).